The following is a 249-amino-acid chain: V-type proton ATPase subunit D 2 (249 aa).

It belongs to the V-ATPase D subunit family. V-ATPase is a heteromultimeric enzyme made up of two complexes: the ATP-hydrolytic V1 complex and the proton translocation V0 complex. The V1 complex consists of three catalytic AB heterodimers that form a heterohexamer, three peripheral stalks each consisting of EG heterodimers, one central rotor including subunits D and F, and the regulatory subunits C and H. The proton translocation complex V0 consists of the proton transport subunit a, a ring of proteolipid subunits c9c'', rotary subunit d, subunits e and f, and the accessory subunits VhaAC45 and ATP6AP2.

Functionally, subunit of the V1 complex of vacuolar(H+)-ATPase (V-ATPase), a multisubunit enzyme composed of a peripheral complex (V1) that hydrolyzes ATP and a membrane integral complex (V0) that translocates protons. V-ATPase is responsible for acidifying and maintaining the pH of intracellular compartments and in some cell types, is targeted to the plasma membrane, where it is responsible for acidifying the extracellular environment. This Drosophila melanogaster (Fruit fly) protein is V-type proton ATPase subunit D 2 (Vha36-3).